A 222-amino-acid chain; its full sequence is MNTPIVILNYKTYLESSGENALELARALKSASEESGITMVAAPQAADIYRIQDQISLPIFAQHIDPITPGGHTGSNLIETLIEAGISGSLINHSENRMKLADIDEVIQLCKQNDIESCVCTNNIATSKAIATFSPDAVAVEPPELIGTGIPVSQAQPEVVEDSVKGVKSINKKIKVLCGAGISTGDDMKAAMDLGADGVLLASGIVKAKNPKEALLDLVSKL.

9-11 is a binding site for substrate; the sequence is NYK. The active-site Electrophile is His93. Catalysis depends on Glu141, which acts as the Proton acceptor. Residues Ile146, Gly181, and 202–203 contribute to the substrate site; that span reads AS.

It belongs to the triosephosphate isomerase family. As to quaternary structure, homotetramer; dimer of dimers.

It localises to the cytoplasm. It carries out the reaction D-glyceraldehyde 3-phosphate = dihydroxyacetone phosphate. The protein operates within carbohydrate biosynthesis; gluconeogenesis. Its pathway is carbohydrate degradation; glycolysis; D-glyceraldehyde 3-phosphate from glycerone phosphate: step 1/1. Involved in the gluconeogenesis. Catalyzes stereospecifically the conversion of dihydroxyacetone phosphate (DHAP) to D-glyceraldehyde-3-phosphate (G3P). The chain is Triosephosphate isomerase from Methanobrevibacter smithii (strain ATCC 35061 / DSM 861 / OCM 144 / PS).